Reading from the N-terminus, the 736-residue chain is Copper-exporting P-type ATPase (736 aa).

The span at 1–17 shows a compositional bias: basic residues; sequence MKHDHHQGHTHSGKGHA. Residues 1–32 are disordered; it reads MKHDHHQGHTHSGKGHACHHEHNSPKTQQASS. 6 helical membrane-spanning segments follow: residues 85 to 105, 114 to 134, 149 to 169, 183 to 203, 341 to 361, and 369 to 389; these read FWIA…GHGL, SSWI…WPFF, FTLI…AVLW, VVAV…LGQV, GWFV…WALL, and YGLI…LGLA. D426 functions as the 4-aspartylphosphate intermediate in the catalytic mechanism. Positions 426, 428, and 624 each coordinate Mg(2+). Helical transmembrane passes span 682-702 and 706-726; these read LFFA…VLYP and LLLS…SVII.

This sequence belongs to the cation transport ATPase (P-type) (TC 3.A.3) family. Type IB subfamily. Mg(2+) is required as a cofactor.

The protein localises to the cell inner membrane. It carries out the reaction Cu(+)(in) + ATP + H2O = Cu(+)(out) + ADP + phosphate + H(+). Activated by phospholipids, Mg(2+) and Cu(+). Functionally, couples the hydrolysis of ATP with the export of copper. In Legionella pneumophila subsp. pneumophila (strain Philadelphia 1 / ATCC 33152 / DSM 7513), this protein is Copper-exporting P-type ATPase.